The chain runs to 251 residues: Hydroxyacylglutathione hydrolase (251 aa).

7 residues coordinate Zn(2+): His-53, His-55, Asp-57, His-58, His-110, Asp-127, and His-165.

The protein belongs to the metallo-beta-lactamase superfamily. Glyoxalase II family. Monomer. Zn(2+) is required as a cofactor.

It carries out the reaction an S-(2-hydroxyacyl)glutathione + H2O = a 2-hydroxy carboxylate + glutathione + H(+). It functions in the pathway secondary metabolite metabolism; methylglyoxal degradation; (R)-lactate from methylglyoxal: step 2/2. Functionally, thiolesterase that catalyzes the hydrolysis of S-D-lactoyl-glutathione to form glutathione and D-lactic acid. The chain is Hydroxyacylglutathione hydrolase from Escherichia coli (strain UTI89 / UPEC).